Consider the following 162-residue polypeptide: GTP-dependent dephospho-CoA kinase (162 aa).

Asp-40, Val-41, Val-42, Asp-59, Lys-61, and Glu-111 together coordinate GTP.

Belongs to the GTP-dependent DPCK family.

It carries out the reaction 3'-dephospho-CoA + GTP = GDP + CoA + H(+). It functions in the pathway cofactor biosynthesis; coenzyme A biosynthesis. Catalyzes the GTP-dependent phosphorylation of the 3'-hydroxyl group of dephosphocoenzyme A to form coenzyme A (CoA). In Sulfurisphaera tokodaii (strain DSM 16993 / JCM 10545 / NBRC 100140 / 7) (Sulfolobus tokodaii), this protein is GTP-dependent dephospho-CoA kinase.